Reading from the N-terminus, the 183-residue chain is MTEMKILIVTLTYIEKSIIDEIVNNLSSYGLEVDILFDSRKYLPISAFNWERLQYDAEKVLSFLKSKYDFNYDSIIFLADSDGYIDGYNFVFGLTIDNFAIIFLNRLREEFYNRKPDLELFMKRVVKEVTHEAGHTLGLGHCNTIGCVMNFSNTVEDVDKKQARFCKNCIYKIENLSKYLQRK.

Position 131 (His131) interacts with Zn(2+). Residue Glu132 is the Proton acceptor of the active site. His135, His141, Cys142, Cys147, Cys166, and Cys169 together coordinate Zn(2+).

This sequence belongs to the peptidase M54 family. In terms of assembly, monomer. Zn(2+) is required as a cofactor.

Probable zinc metalloprotease whose natural substrate is unknown. This is Archaemetzincin from Saccharolobus islandicus (strain L.S.2.15 / Lassen #1) (Sulfolobus islandicus).